The sequence spans 96 residues: MSAAVWQDGEDIVLKLYIQPKASRDKIVGLHGEELKIAITAPPVDGKANAHLTKFLAKQFKIAKGLVHIEKGELGRHKQIRIESPVQIPAEVKAIL.

The protein belongs to the UPF0235 family.

This chain is UPF0235 protein VP2619, found in Vibrio parahaemolyticus serotype O3:K6 (strain RIMD 2210633).